We begin with the raw amino-acid sequence, 1311 residues long: Mitogen-activated protein kinase kinase kinase 19 (1311 aa).

Disordered regions lie at residues 85–119, 250–274, 330–363, 396–472, 486–508, 576–607, and 734–767; these read PDPL…SPPD, PLSQ…PVEH, SVKE…YLSS, MTPA…NPEM, EGTS…PAQN, HRPH…KQAF, and SKDK…FLSS. Positions 250–261 are enriched in polar residues; it reads PLSQSAEFSSSK. Basic and acidic residues-rich tracts occupy residues 262-274, 330-345, and 450-464; these read NHQE…PVEH, SVKE…RDSG, and LEGH…KIPM. The span at 734–748 shows a compositional bias: basic and acidic residues; the sequence is SKDKGCKDMGGHTED. The 264-residue stretch at 1044–1307 folds into the Protein kinase domain; sequence WTKGEILGRG…ALQLLKHSFL (264 aa). ATP is bound by residues 1050-1058 and K1072; that span reads LGRGAYGTV. The Proton acceptor role is filled by D1169.

This sequence belongs to the protein kinase superfamily. STE Ser/Thr protein kinase family. STE20 subfamily.

It catalyses the reaction L-seryl-[protein] + ATP = O-phospho-L-seryl-[protein] + ADP + H(+). The catalysed reaction is L-threonyl-[protein] + ATP = O-phospho-L-threonyl-[protein] + ADP + H(+). The polypeptide is Mitogen-activated protein kinase kinase kinase 19 (Map3k19) (Mus musculus (Mouse)).